The sequence spans 242 residues: Carbendazim hydrolyzing esterase (242 aa).

Ser-77 acts as the Acyl-ester intermediate in catalysis.

The protein belongs to the AB hydrolase superfamily.

It is found in the secreted. It carries out the reaction carbendazim + H2O = 2-aminobenzimidazole + methanol + CO2. The catalysed reaction is carbendazim + H2O = N-(1H-1,3-benzodiazol-2-yl)carbamate + methanol + H(+). It catalyses the reaction N-(1H-1,3-benzodiazol-2-yl)carbamate + H(+) = 2-aminobenzimidazole + CO2. Its function is as follows. Catalyzes the hydrolysis of the fungicide carbendazim (methyl-1H-benzimidazol-2-ylcarbamate or MBC) to 2-aminobenzimidazole (2-AB). Following hydrolysis of the carbamate ester, the carbamate decarboxylates spontaneously. Can hydrolyze model carboxylesters such as methyl salicylate, alpha-naphthyl acetate and p-nitrophenyl acetate. In addition, shows substantial hydrolytic activity in vitro against widespread pollutants with carboxylester, carbamate and amide linkages, such as dimethyl phthalate, propanil and chlorpropham. The protein is Carbendazim hydrolyzing esterase of Nocardioides sp. (strain SG-4G).